Here is a 191-residue protein sequence, read N- to C-terminus: GTP-dependent dephospho-CoA kinase (191 aa).

Asp-46, Asp-65, Lys-67, and Glu-122 together coordinate GTP.

This sequence belongs to the GTP-dependent DPCK family.

The enzyme catalyses 3'-dephospho-CoA + GTP = GDP + CoA + H(+). The protein operates within cofactor biosynthesis; coenzyme A biosynthesis. Functionally, catalyzes the GTP-dependent phosphorylation of the 3'-hydroxyl group of dephosphocoenzyme A to form coenzyme A (CoA). This chain is GTP-dependent dephospho-CoA kinase, found in Methanopyrus kandleri (strain AV19 / DSM 6324 / JCM 9639 / NBRC 100938).